Reading from the N-terminus, the 170-residue chain is Photosystem I assembly protein Ycf3 (170 aa).

TPR repeat units follow at residues 35–68 (AFTY…EIDP), 72–105 (SYIL…NPFL), and 120–153 (GEQA…TPGN).

Belongs to the Ycf3 family.

The protein resides in the plastid. Its subcellular location is the chloroplast thylakoid membrane. Essential for the assembly of the photosystem I (PSI) complex. May act as a chaperone-like factor to guide the assembly of the PSI subunits. This is Photosystem I assembly protein Ycf3 from Oryza nivara (Indian wild rice).